We begin with the raw amino-acid sequence, 93 residues long: Small ribosomal subunit protein uS15 (93 aa).

The protein belongs to the universal ribosomal protein uS15 family. As to quaternary structure, part of the 30S ribosomal subunit. Forms a bridge to the 50S subunit in the 70S ribosome, contacting the 23S rRNA.

Its function is as follows. One of the primary rRNA binding proteins, it binds directly to 16S rRNA where it helps nucleate assembly of the platform of the 30S subunit by binding and bridging several RNA helices of the 16S rRNA. Forms an intersubunit bridge (bridge B4) with the 23S rRNA of the 50S subunit in the ribosome. In Anaplasma marginale (strain Florida), this protein is Small ribosomal subunit protein uS15.